Consider the following 500-residue polypeptide: Protein farnesyltransferase subunit beta (500 aa).

The tract at residues 117 to 140 (LQNDDNNGNNNNRENNQNGGGFGG) is disordered. The span at 119–133 (NDDNNGNNNNRENNQ) shows a compositional bias: low complexity. PFTB repeat units lie at residues 121-162 (DNNG…YVIG), 172-213 (REAM…SMLN), 220-261 (ERGV…SILN), 268-309 (MNSL…IIIQ), and 343-384 (QEYV…SLSQ). (2E,6E)-farnesyl diphosphate-binding positions include 246-249 (HGGY) and 288-291 (RTNK). Zn(2+) contacts are provided by aspartate 294 and cysteine 296. 297–300 (YSYW) contributes to the (2E,6E)-farnesyl diphosphate binding site. Zn(2+) is bound at residue histidine 372. The disordered stretch occupies residues 402–451 (FEQPSPPINKKSTNVFTISNNNNNNNNKNNNSDDNNNNSNNNNNNSENQL). Low complexity predominate over residues 420-449 (SNNNNNNNNKNNNSDDNNNNSNNNNNNSEN).

This sequence belongs to the protein prenyltransferase subunit beta family. In terms of assembly, heterodimer of fntA and fntB (farnesyltransferase). Heterodimer of an alpha and a beta subunit. Requires Zn(2+) as cofactor.

The catalysed reaction is L-cysteinyl-[protein] + (2E,6E)-farnesyl diphosphate = S-(2E,6E)-farnesyl-L-cysteinyl-[protein] + diphosphate. Catalyzes the transfer of a farnesyl moiety from farnesyl diphosphate to a cysteine at the fourth position from the C-terminus of several proteins. The beta subunit is responsible for peptide-binding. The polypeptide is Protein farnesyltransferase subunit beta (fntB) (Dictyostelium discoideum (Social amoeba)).